The sequence spans 247 residues: Coproheme decarboxylase (247 aa).

Fe-coproporphyrin III is bound by residues Arg-129, 143–147 (YPMDK), His-170, Gln-183, and Ser-221. Tyr-143 is a catalytic residue.

This sequence belongs to the ChdC family. Type 1 subfamily. Fe-coproporphyrin III is required as a cofactor.

It carries out the reaction Fe-coproporphyrin III + 2 H2O2 + 2 H(+) = heme b + 2 CO2 + 4 H2O. The enzyme catalyses Fe-coproporphyrin III + H2O2 + H(+) = harderoheme III + CO2 + 2 H2O. The catalysed reaction is harderoheme III + H2O2 + H(+) = heme b + CO2 + 2 H2O. It participates in porphyrin-containing compound metabolism; protoheme biosynthesis. Functionally, involved in coproporphyrin-dependent heme b biosynthesis. Catalyzes the decarboxylation of Fe-coproporphyrin III (coproheme) to heme b (protoheme IX), the last step of the pathway. The reaction occurs in a stepwise manner with a three-propionate intermediate. This Bacillus cereus (strain ATCC 10987 / NRS 248) protein is Coproheme decarboxylase.